The primary structure comprises 104 residues: Large ribosomal subunit protein uL24 (104 aa).

It belongs to the universal ribosomal protein uL24 family. As to quaternary structure, part of the 50S ribosomal subunit.

One of two assembly initiator proteins, it binds directly to the 5'-end of the 23S rRNA, where it nucleates assembly of the 50S subunit. Its function is as follows. One of the proteins that surrounds the polypeptide exit tunnel on the outside of the subunit. The chain is Large ribosomal subunit protein uL24 from Nitrobacter hamburgensis (strain DSM 10229 / NCIMB 13809 / X14).